Consider the following 100-residue polypeptide: Integration host factor subunit alpha (100 aa).

Belongs to the bacterial histone-like protein family. As to quaternary structure, heterodimer of an alpha and a beta chain.

Its function is as follows. This protein is one of the two subunits of integration host factor, a specific DNA-binding protein that functions in genetic recombination as well as in transcriptional and translational control. The protein is Integration host factor subunit alpha of Hahella chejuensis (strain KCTC 2396).